Reading from the N-terminus, the 277-residue chain is NH(3)-dependent NAD(+) synthetase (277 aa).

Position 36-43 (36-43 (GLSGGIDS)) interacts with ATP. A Mg(2+)-binding site is contributed by aspartate 42. Arginine 118 serves as a coordination point for deamido-NAD(+). Threonine 138 lines the ATP pocket. Glutamate 143 contributes to the Mg(2+) binding site. 2 residues coordinate ATP: lysine 167 and serine 189.

Belongs to the NAD synthetase family. As to quaternary structure, homodimer.

The enzyme catalyses deamido-NAD(+) + NH4(+) + ATP = AMP + diphosphate + NAD(+) + H(+). Its pathway is cofactor biosynthesis; NAD(+) biosynthesis; NAD(+) from deamido-NAD(+) (ammonia route): step 1/1. Its function is as follows. Catalyzes the ATP-dependent amidation of deamido-NAD to form NAD. Uses ammonia as a nitrogen source. This chain is NH(3)-dependent NAD(+) synthetase, found in Chlorobaculum tepidum (strain ATCC 49652 / DSM 12025 / NBRC 103806 / TLS) (Chlorobium tepidum).